A 145-amino-acid chain; its full sequence is Ribonuclease VapC24 (145 aa).

The PINc domain maps to 4-123 (IDTNILLYAQ…RHHGVDEFAT (120 aa)). Residues D5 and D106 each contribute to the Mg(2+) site.

Belongs to the PINc/VapC protein family. The cofactor is Mg(2+).

Functionally, toxic component of a type II toxin-antitoxin (TA) system. An RNase. Its cognate antitoxin is VapB24. This Mycobacterium tuberculosis (strain CDC 1551 / Oshkosh) protein is Ribonuclease VapC24.